The following is a 252-amino-acid chain: Chitooligosaccharide deacetylase (252 aa).

His61 and His125 together coordinate Mg(2+).

Belongs to the YdjC deacetylase family. ChbG subfamily. As to quaternary structure, homodimer. It depends on Mg(2+) as a cofactor.

The protein resides in the cytoplasm. The enzyme catalyses N,N'-diacetylchitobiose + H2O = N-acetyl-beta-D-glucosaminyl-(1-&gt;4)-D-glucosamine + acetate. It catalyses the reaction diacetylchitobiose-6'-phosphate + H2O = N'-monoacetylchitobiose-6'-phosphate + acetate. The protein operates within glycan degradation; chitin degradation. Functionally, involved in the degradation of chitin. ChbG is essential for growth on the acetylated chitooligosaccharides chitobiose and chitotriose but is dispensable for growth on cellobiose and chitosan dimer, the deacetylated form of chitobiose. Deacetylation of chitobiose-6-P and chitotriose-6-P is necessary for both the activation of the chb promoter by the regulatory protein ChbR and the hydrolysis of phosphorylated beta-glucosides by the phospho-beta-glucosidase ChbF. Catalyzes the removal of only one acetyl group from chitobiose-6-P to yield monoacetylchitobiose-6-P, the inducer of ChbR and the substrate of ChbF. This Escherichia coli O127:H6 (strain E2348/69 / EPEC) protein is Chitooligosaccharide deacetylase.